A 264-amino-acid polypeptide reads, in one-letter code: Thymidylate synthase (264 aa).

Residue R21 coordinates dUMP. H51 serves as a coordination point for (6R)-5,10-methylene-5,6,7,8-tetrahydrofolate. DUMP is bound at residue 126–127 (RR). The active-site Nucleophile is C146. DUMP is bound by residues 166 to 169 (RSCD), N177, and 207 to 209 (HLY). D169 contacts (6R)-5,10-methylene-5,6,7,8-tetrahydrofolate. Residue A263 coordinates (6R)-5,10-methylene-5,6,7,8-tetrahydrofolate.

It belongs to the thymidylate synthase family. Bacterial-type ThyA subfamily. As to quaternary structure, homodimer.

The protein localises to the cytoplasm. It carries out the reaction dUMP + (6R)-5,10-methylene-5,6,7,8-tetrahydrofolate = 7,8-dihydrofolate + dTMP. Its pathway is pyrimidine metabolism; dTTP biosynthesis. In terms of biological role, catalyzes the reductive methylation of 2'-deoxyuridine-5'-monophosphate (dUMP) to 2'-deoxythymidine-5'-monophosphate (dTMP) while utilizing 5,10-methylenetetrahydrofolate (mTHF) as the methyl donor and reductant in the reaction, yielding dihydrofolate (DHF) as a by-product. This enzymatic reaction provides an intracellular de novo source of dTMP, an essential precursor for DNA biosynthesis. In Shewanella baltica (strain OS155 / ATCC BAA-1091), this protein is Thymidylate synthase.